Here is a 366-residue protein sequence, read N- to C-terminus: uncharacterized protein (366 aa).

The active-site Proton donor is Glu-139. Residue Glu-249 is the Nucleophile of the active site.

Belongs to the glycosyl hydrolase 53 family.

This is an uncharacterized protein from Niallia circulans (Bacillus circulans).